The sequence spans 115 residues: NAD(P)H-quinone oxidoreductase subunit M (115 aa).

It belongs to the complex I NdhM subunit family. In terms of assembly, NDH-1 can be composed of about 15 different subunits; different subcomplexes with different compositions have been identified which probably have different functions.

It is found in the cellular thylakoid membrane. The enzyme catalyses a plastoquinone + NADH + (n+1) H(+)(in) = a plastoquinol + NAD(+) + n H(+)(out). The catalysed reaction is a plastoquinone + NADPH + (n+1) H(+)(in) = a plastoquinol + NADP(+) + n H(+)(out). In terms of biological role, NDH-1 shuttles electrons from an unknown electron donor, via FMN and iron-sulfur (Fe-S) centers, to quinones in the respiratory and/or the photosynthetic chain. The immediate electron acceptor for the enzyme in this species is believed to be plastoquinone. Couples the redox reaction to proton translocation, and thus conserves the redox energy in a proton gradient. Cyanobacterial NDH-1 also plays a role in inorganic carbon-concentration. This chain is NAD(P)H-quinone oxidoreductase subunit M, found in Synechococcus sp. (strain WH7803).